The chain runs to 360 residues: D-alanine--D-alanine ligase (360 aa).

Positions 146-352 (KLCVADAGIA…FPELAERLLQ (207 aa)) constitute an ATP-grasp domain. 179–234 (EEKFIYPFFVKPANLGSSIGISKVHHREQLPAALKSACSLDSKIVVEKAITGREIE) is an ATP binding site. Residues Asp305, Glu319, and Asn321 each coordinate Mg(2+).

Belongs to the D-alanine--D-alanine ligase family. Requires Mg(2+) as cofactor. Mn(2+) is required as a cofactor.

The protein localises to the cytoplasm. It carries out the reaction 2 D-alanine + ATP = D-alanyl-D-alanine + ADP + phosphate + H(+). It functions in the pathway cell wall biogenesis; peptidoglycan biosynthesis. Functionally, cell wall formation. The protein is D-alanine--D-alanine ligase of Pelodictyon phaeoclathratiforme (strain DSM 5477 / BU-1).